The chain runs to 535 residues: Cytochrome c oxidase subunit 1 (535 aa).

The helical transmembrane segment at 15-37 (IAILYFIFSTFCGLAGTAMSFII) threads the bilayer. The Ca(2+) site is built by E40, A43, and G45. 5 consecutive transmembrane segments (helical) span residues 58–80 (VLVTGHTILMVFFLVMPMLIGGF), 147–169 (LAIFSLHLTTISSLLGTINFIVT), 190–212 (ILITAVMLLMSLPVLSAGVTMLL), 238–260 (WFFGHPEVYIMIVPTFGMMSHIV), and 267–289 (PVFGEISMIYTMGSISLLGFLVW). H63 is a Fe(II)-heme a binding site. H242 contacts Cu cation. The 1'-histidyl-3'-tyrosine (His-Tyr) cross-link spans 242-246 (HPEVY). Position 246 (Y246) interacts with O2. Cu cation contacts are provided by H291 and H292. 2 helical membrane-spanning segments follow: residues 304 to 326 (AYFTSATMIITIPTSIKVFSWLT) and 339 to 361 (MLYTLSFLFLFTVGGLTGVVLAN). Residues H369 and D370 each coordinate Mg(2+). A run of 2 helical transmembrane segments spans residues 376–398 (THFHYVLSLGAVFSMFAGYYYWS) and 415–437 (FWLIFLGTNIIFFPMHFLGINGM). H377 is a binding site for heme a3. Residue H379 participates in Fe(II)-heme a binding. P442 serves as a coordination point for Ca(2+). The helical transmembrane segment at 452-474 (NLVSSFGSMMTIMSLMLFTYIIY) threads the bilayer.

It belongs to the heme-copper respiratory oxidase family. As to quaternary structure, component of the cytochrome c oxidase (complex IV, CIV), a multisubunit enzyme composed of a catalytic core of 3 subunits and several supernumerary subunits. The complex exists as a monomer or a dimer and forms supercomplexes (SCs) in the inner mitochondrial membrane with ubiquinol-cytochrome c oxidoreductase (cytochrome b-c1 complex, complex III, CIII). Heme serves as cofactor. Requires Cu cation as cofactor.

The protein resides in the mitochondrion inner membrane. It carries out the reaction 4 Fe(II)-[cytochrome c] + O2 + 8 H(+)(in) = 4 Fe(III)-[cytochrome c] + 2 H2O + 4 H(+)(out). It participates in energy metabolism; oxidative phosphorylation. In terms of biological role, component of the cytochrome c oxidase, the last enzyme in the mitochondrial electron transport chain which drives oxidative phosphorylation. The respiratory chain contains 3 multisubunit complexes succinate dehydrogenase (complex II, CII), ubiquinol-cytochrome c oxidoreductase (cytochrome b-c1 complex, complex III, CIII) and cytochrome c oxidase (complex IV, CIV), that cooperate to transfer electrons derived from NADH and succinate to molecular oxygen, creating an electrochemical gradient over the inner membrane that drives transmembrane transport and the ATP synthase. Cytochrome c oxidase is the component of the respiratory chain that catalyzes the reduction of oxygen to water. Electrons originating from reduced cytochrome c in the intermembrane space (IMS) are transferred via the dinuclear copper A center (CU(A)) of subunit 2 and heme A of subunit 1 to the active site in subunit 1, a binuclear center (BNC) formed by heme A3 and copper B (CU(B)). The BNC reduces molecular oxygen to 2 water molecules using 4 electrons from cytochrome c in the IMS and 4 protons from the mitochondrial matrix. This chain is Cytochrome c oxidase subunit 1 (COX1), found in Eremothecium gossypii (strain ATCC 10895 / CBS 109.51 / FGSC 9923 / NRRL Y-1056) (Yeast).